Reading from the N-terminus, the 105-residue chain is Co-chaperonin GroES (105 aa).

This sequence belongs to the GroES chaperonin family. As to quaternary structure, heptamer of 7 subunits arranged in a ring. Interacts with the chaperonin GroEL.

It localises to the cytoplasm. Its function is as follows. Together with the chaperonin GroEL, plays an essential role in assisting protein folding. The GroEL-GroES system forms a nano-cage that allows encapsulation of the non-native substrate proteins and provides a physical environment optimized to promote and accelerate protein folding. GroES binds to the apical surface of the GroEL ring, thereby capping the opening of the GroEL channel. This chain is Co-chaperonin GroES, found in Methylovorus sp. (strain SS1 / DSM 11726).